The chain runs to 386 residues: S-adenosylmethionine synthase (386 aa).

An ATP-binding site is contributed by His16. Asp18 lines the Mg(2+) pocket. Residue Glu44 participates in K(+) binding. L-methionine is bound by residues Glu57 and Gln100. The tract at residues 100–110 (QSGDIAMGVDE) is flexible loop. Residues 165–167 (DAK), Asp240, 246–247 (RK), Ala263, and Lys267 each bind ATP. Asp240 is a binding site for L-methionine. Lys271 serves as a coordination point for L-methionine.

The protein belongs to the AdoMet synthase family. As to quaternary structure, homotetramer; dimer of dimers. It depends on Mg(2+) as a cofactor. K(+) is required as a cofactor.

The protein resides in the cytoplasm. It carries out the reaction L-methionine + ATP + H2O = S-adenosyl-L-methionine + phosphate + diphosphate. It participates in amino-acid biosynthesis; S-adenosyl-L-methionine biosynthesis; S-adenosyl-L-methionine from L-methionine: step 1/1. Catalyzes the formation of S-adenosylmethionine (AdoMet) from methionine and ATP. The overall synthetic reaction is composed of two sequential steps, AdoMet formation and the subsequent tripolyphosphate hydrolysis which occurs prior to release of AdoMet from the enzyme. The protein is S-adenosylmethionine synthase of Hahella chejuensis (strain KCTC 2396).